The primary structure comprises 1409 residues: Tensin-2 (1409 aa).

The tract at residues 1–35 (MKSSGPVERLLRALGRRDSSRAASRPRKAEPHSFR) is disordered. Positions 9–20 (RLLRALGRRDSS) are enriched in basic and acidic residues. The Phorbol-ester/DAG-type zinc-finger motif lies at 31–79 (PHSFREKVFRKKPPVCAVCKVTIDGTGVSCRVCKVATHRKCEAKVTSAC). Residue threonine 91 is modified to Phosphothreonine. Residues serine 118 and serine 120 each carry the phosphoserine modification. One can recognise a Phosphatase tensin-type domain in the interval 122–294 (DPLMERRWDL…SYFSGLLSGS (173 aa)). Catalysis depends on cysteine 231, which acts as the Phosphocysteine intermediate. Positions 299 to 425 (SSPLFLHYVL…ASVEFVFSSS (127 aa)) constitute a C2 tensin-type domain. A Phosphoserine modification is found at serine 455. Tyrosine 456 carries the post-translational modification Phosphotyrosine. Positions 462–536 (HHEDSVDGSL…SPGRPPPTAA (75 aa)) are disordered. At serine 466 the chain carries Phosphoserine. Threonine 474 bears the Phosphothreonine mark. Residue serine 481 is modified to Phosphoserine. Phosphotyrosine is present on tyrosine 483. Positions 491 to 506 (RQTPPAPSPEPPPPPM) are enriched in pro residues. At arginine 555 the chain carries Omega-N-methylarginine. 3 disordered regions span residues 562–582 (AILDDEEQPTVGGGPHLGVYP), 812–1098 (PGEG…SSPA), and 1111–1130 (LSDNVPQTPEPPTQESQSNV). Serine 820, serine 825, serine 830, serine 832, serine 835, and serine 845 each carry phosphoserine. Composition is skewed to polar residues over residues 900–918 (SASSELSGPSTPLHTSSPV) and 930–940 (RSPTSAPTQRL). Threonine 910 carries the phosphothreonine modification. 3 positions are modified to phosphoserine: serine 931, serine 941, and serine 972. Residues 968-982 (PLAPSPVSPTFPPSS) are compositionally biased toward pro residues. The residue at position 977 (threonine 977) is a Phosphothreonine. Phosphoserine occurs at positions 991 and 1003. Pro residues predominate over residues 1046–1056 (PEPPQSSPTPA). Residues 1140-1247 (WYKPHLSRDQ…SLPCCLRIPS (108 aa)) form the SH2 domain. Threonine 1182 is subject to Phosphothreonine. A Phosphoserine modification is found at serine 1247. The region spanning 1275–1408 (ACSVLYLTSV…FITKVLLGQR (134 aa)) is the PTB domain.

This sequence belongs to the PTEN phosphatase protein family. In terms of assembly, interacts with AXL. Interacts with SYK; leading to its phosphorylation. Interacts with SQSTM1 (via PB1 domain); the interaction leads to sequestration of TNS2 in cytoplasmic aggregates with SQSTM1 and promotes TNS2 ubiquitination and proteasomal degradation. Post-translationally, ubiquitinated following sequestration in cytoplasmic aggregates with SQSTM1, leading to proteasomal degradation. As to expression, detected in heart, kidney, brain, thymus, spleen, liver, placenta, lung, skeletal muscle and small intestine.

It localises to the cell junction. It is found in the focal adhesion. Its subcellular location is the cell membrane. The protein localises to the cytoplasm. It catalyses the reaction O-phospho-L-tyrosyl-[protein] + H2O = L-tyrosyl-[protein] + phosphate. Functionally, tyrosine-protein phosphatase which regulates cell motility, proliferation and muscle-response to insulin. Phosphatase activity is mediated by binding to phosphatidylinositol-3,4,5-triphosphate (PtdIns(3,4,5)P3) via the SH2 domain. In muscles and under catabolic conditions, dephosphorylates IRS1 leading to its degradation and muscle atrophy. Negatively regulates PI3K-AKT pathway activation. Dephosphorylates nephrin NPHS1 in podocytes which regulates activity of the mTORC1 complex. Under normal glucose conditions, NPHS1 outcompetes IRS1 for binding to phosphatidylinositol 3-kinase (PI3K) which balances mTORC1 activity but high glucose conditions lead to up-regulation of TNS2, increased NPHS1 dephosphorylation and activation of mTORC1, contributing to podocyte hypertrophy and proteinuria. Required for correct podocyte morphology, podocyte-glomerular basement membrane interaction and integrity of the glomerular filtration barrier. Enhances RHOA activation in the presence of DLC1. Plays a role in promoting DLC1-dependent remodeling of the extracellular matrix. The sequence is that of Tensin-2 (TNS2) from Homo sapiens (Human).